Consider the following 596-residue polypeptide: Putative terpene synthase 3, chloroplastic (596 aa).

Residues 1–46 (MATLSMQVSTLSKQVKNLNTFGMGSASKLPMVARRVSTIRLRPICS) constitute a chloroplast transit peptide. Positions 349 and 353 each coordinate Mn(2+). Residues 349-353 (DDVYD) carry the DDXXD motif motif. 2 homodimerization regions span residues 355–361 (YGTLDEL) and 427–464 (EAKW…FTLP). Mn(2+)-binding residues include D493 and E501.

This sequence belongs to the terpene synthase family. In terms of assembly, homodimer. Requires Mn(2+) as cofactor. Mg(2+) is required as a cofactor.

Its subcellular location is the plastid. The protein localises to the chloroplast. It participates in secondary metabolite biosynthesis; terpenoid biosynthesis. In terms of biological role, putative monoterpene synthase. This is Putative terpene synthase 3, chloroplastic from Thymus vulgaris (Thyme).